A 135-amino-acid polypeptide reads, in one-letter code: M-zodatoxin-Lt8q (135 aa).

The signal sequence occupies residues 1-20 (MKYFVVALALVAAFACIAES). A propeptide spanning residues 21–60 (KPAESEHELAEVEEENELADLEDAVWLEHLADLSDLEEAR) is cleaved from the precursor.

It belongs to the cationic peptide 06 (cytoinsectotoxin) family. Expressed by the venom gland.

It is found in the secreted. Insecticidal, cytolytic and antimicrobial peptide. Forms voltage-dependent, ion-permeable channels in membranes. At high concentration causes cell membrane lysis. The protein is M-zodatoxin-Lt8q (cit 1-16) of Lachesana tarabaevi (Spider).